The primary structure comprises 581 residues: Proline--tRNA ligase (581 aa).

This sequence belongs to the class-II aminoacyl-tRNA synthetase family. ProS type 1 subfamily. In terms of assembly, homodimer.

It localises to the cytoplasm. The catalysed reaction is tRNA(Pro) + L-proline + ATP = L-prolyl-tRNA(Pro) + AMP + diphosphate. In terms of biological role, catalyzes the attachment of proline to tRNA(Pro) in a two-step reaction: proline is first activated by ATP to form Pro-AMP and then transferred to the acceptor end of tRNA(Pro). As ProRS can inadvertently accommodate and process non-cognate amino acids such as alanine and cysteine, to avoid such errors it has two additional distinct editing activities against alanine. One activity is designated as 'pretransfer' editing and involves the tRNA(Pro)-independent hydrolysis of activated Ala-AMP. The other activity is designated 'posttransfer' editing and involves deacylation of mischarged Ala-tRNA(Pro). The misacylated Cys-tRNA(Pro) is not edited by ProRS. This chain is Proline--tRNA ligase, found in Polaromonas naphthalenivorans (strain CJ2).